Reading from the N-terminus, the 906-residue chain is Protein translocase subunit SecA (906 aa).

Residues Q86, 104–108 (GEGKT), and D511 each bind ATP. Composition is skewed to basic and acidic residues over residues 853-865 (HESVIDNNQRHDE) and 877-888 (VRREGPKVKRND). The tract at residues 853-906 (HESVIDNNQRHDEDEQEEAPKVQQVRREGPKVKRNDPCPCGSGKKYKQCHSKVE) is disordered. Residues C890, C892, C901, and H902 each contribute to the Zn(2+) site. The span at 896 to 906 (KKYKQCHSKVE) shows a compositional bias: basic residues.

The protein belongs to the SecA family. In terms of assembly, monomer and homodimer. Part of the essential Sec protein translocation apparatus which comprises SecA, SecYEG and auxiliary proteins SecDF-YajC and YidC. It depends on Zn(2+) as a cofactor.

Its subcellular location is the cell inner membrane. It localises to the cytoplasm. The catalysed reaction is ATP + H2O + cellular proteinSide 1 = ADP + phosphate + cellular proteinSide 2.. Part of the Sec protein translocase complex. Interacts with the SecYEG preprotein conducting channel. Has a central role in coupling the hydrolysis of ATP to the transfer of proteins into and across the cell membrane, serving both as a receptor for the preprotein-SecB complex and as an ATP-driven molecular motor driving the stepwise translocation of polypeptide chains across the membrane. This is Protein translocase subunit SecA from Francisella tularensis subsp. tularensis (strain WY96-3418).